Here is a 149-residue protein sequence, read N- to C-terminus: uncharacterized protein (149 aa).

Residues 124-144 (IIIIALIIILANYAPSIIGKI) traverse the membrane as a helical segment.

Belongs to the M.jannaschii MJ0023/MJ0349/MJ1072/MJ1074/MJ1107/MJECL16 family.

The protein localises to the membrane. This is an uncharacterized protein from Methanocaldococcus jannaschii (strain ATCC 43067 / DSM 2661 / JAL-1 / JCM 10045 / NBRC 100440) (Methanococcus jannaschii).